The sequence spans 351 residues: Nicotinate-nucleotide--dimethylbenzimidazole phosphoribosyltransferase (351 aa).

Glu319 functions as the Proton acceptor in the catalytic mechanism.

Belongs to the CobT family.

It carries out the reaction 5,6-dimethylbenzimidazole + nicotinate beta-D-ribonucleotide = alpha-ribazole 5'-phosphate + nicotinate + H(+). Its pathway is nucleoside biosynthesis; alpha-ribazole biosynthesis; alpha-ribazole from 5,6-dimethylbenzimidazole: step 1/2. Functionally, catalyzes the synthesis of alpha-ribazole-5'-phosphate from nicotinate mononucleotide (NAMN) and 5,6-dimethylbenzimidazole (DMB). This is Nicotinate-nucleotide--dimethylbenzimidazole phosphoribosyltransferase from Desulforamulus reducens (strain ATCC BAA-1160 / DSM 100696 / MI-1) (Desulfotomaculum reducens).